Here is a 368-residue protein sequence, read N- to C-terminus: MMRGAAPTGVVSVMVLMILVLLKQIESASANGSSLGLPPRKFCNIYQGSWVYDKSYPLYDSKNCPFIERQFNCKSNGRPDSEYLKYRWQPSGCNLPRFNGLDFLGRIMKGKKLMFVGDSLSLNQWQSLTCLLHNAAPKANSTSTRSPSGLSVFSFPAYNSSIMFSRNAFLVDIVGAPPKRVMKLDSISSGSLWKTADVLVFNSWHWWLHTDRKQPWDAIMSGNVTVKDMDRLVAYEKAMMTWAKWIDQNIDPSKTKVFFQGISPDHGRAREWSKQGGKGSCIGETKPIMGSSYLAGPHAAEMVVAKVIKTMKNQARLMDVTLMSQLRKDGHPSVYGFGGHRMADCSHWCLSGVPDSWNQLLYSELFHS.

A helical; Signal-anchor for type II membrane protein membrane pass occupies residues 9–25; sequence GVVSVMVLMILVLLKQI. The GDS motif motif lies at 117–119; it reads GDS. A DCXHWCLPGXXDXWN motif motif is present at residues 344–358; sequence DCSHWCLSGVPDSWN.

This sequence belongs to the PC-esterase family. TBL subfamily.

The protein localises to the membrane. May act as a bridging protein that binds pectin and other cell wall polysaccharides. Probably involved in maintaining esterification of pectins. May be involved in the specific O-acetylation of cell wall polymers. The sequence is that of Protein trichome birefringence-like 43 (TBL43) from Arabidopsis thaliana (Mouse-ear cress).